The sequence spans 614 residues: Zinc finger protein 276 (614 aa).

Residues 1 to 50 (MKRDRLGRFLSPGSSRQCGASDGGGGVSRTRGRPSLSGGPRVDGATARRA) form a disordered region. Residues 77–163 (GHCRLCHGKF…LQRVNASPAG (87 aa)) form the ZAD domain. Residues Cys-79, Cys-82, Cys-136, and Cys-139 each coordinate Zn(2+). The tract at residues 268 to 420 (APRLPQHRGW…KKPGPKPGWK (153 aa)) is disordered. The span at 357–369 (SDLSEGDVLSEDE) shows a compositional bias: acidic residues. Positions 386 to 408 (YPERKVSGKKSESKEAKKSEEPR) are enriched in basic and acidic residues. Residues 409 to 420 (IRKKPGPKPGWK) are compositionally biased toward basic residues. 5 C2H2-type zinc fingers span residues 434-458 (YKCP…IKEH), 465-490 (RPCP…KLIH), 496-518 (YICD…QMRH), 524-546 (LQCE…MTKH), and 554-577 (FACD…SMVH). A disordered region spans residues 583–614 (QDKALPLEAEPPPGPPSPSVTTEGQAVKPEPT). Pro residues predominate over residues 591–600 (AEPPPGPPSP).

It localises to the nucleus. It is found in the chromosome. Its subcellular location is the centromere. The protein localises to the kinetochore. In terms of biological role, may be involved in transcriptional regulation. This Homo sapiens (Human) protein is Zinc finger protein 276 (ZNF276).